The primary structure comprises 480 residues: Chromosomal replication initiator protein DnaA (480 aa).

A domain I, interacts with DnaA modulators region spans residues 1–71 (MRHDALFERV…TTLVQQEDSE (71 aa)). A domain II region spans residues 71–137 (EILKVEILVR…RPVQAPLFGS (67 aa)). The tract at residues 138–360 (PLDQRYGFDS…GAFNQLLFRR (223 aa)) is domain III, AAA+ region. ATP is bound by residues Gly-184, Gly-186, Lys-187, and Thr-188. The tract at residues 361–480 (SFEPQLSIER…IELLKRLINE (120 aa)) is domain IV, binds dsDNA.

It belongs to the DnaA family. Oligomerizes as a right-handed, spiral filament on DNA at oriC.

It localises to the cytoplasm. Plays an essential role in the initiation and regulation of chromosomal replication. ATP-DnaA binds to the origin of replication (oriC) to initiate formation of the DNA replication initiation complex once per cell cycle. Binds the DnaA box (a 9 base pair repeat at the origin) and separates the double-stranded (ds)DNA. Forms a right-handed helical filament on oriC DNA; dsDNA binds to the exterior of the filament while single-stranded (ss)DNA is stabiized in the filament's interior. The ATP-DnaA-oriC complex binds and stabilizes one strand of the AT-rich DNA unwinding element (DUE), permitting loading of DNA polymerase. After initiation quickly degrades to an ADP-DnaA complex that is not apt for DNA replication. Binds acidic phospholipids. The protein is Chromosomal replication initiator protein DnaA of Rhizobium meliloti (strain 1021) (Ensifer meliloti).